The sequence spans 249 residues: uncharacterized protein (249 aa).

The protein resides in the cytoplasm. It localises to the nucleus. This is an uncharacterized protein from Schizosaccharomyces pombe (strain 972 / ATCC 24843) (Fission yeast).